The following is a 239-amino-acid chain: LexA repressor (239 aa).

The H-T-H motif DNA-binding region spans 26–46; sequence FDEMKDALDLKSKSGIHRLIT. Catalysis depends on for autocatalytic cleavage activity residues Ser160 and Lys198.

This sequence belongs to the peptidase S24 family. As to quaternary structure, homodimer.

The catalysed reaction is Hydrolysis of Ala-|-Gly bond in repressor LexA.. Represses a number of genes involved in the response to DNA damage (SOS response), including recA and lexA. In the presence of single-stranded DNA, RecA interacts with LexA causing an autocatalytic cleavage which disrupts the DNA-binding part of LexA, leading to derepression of the SOS regulon and eventually DNA repair. This is LexA repressor from Methylobacterium sp. (strain 4-46).